The following is a 196-amino-acid chain: Mediator of RNA polymerase II transcription subunit 21 (196 aa).

The tract at residues 52 to 111 (KIPKNASTPPVPASAPQAAQSQSQASPPPPDTANPQTGGQHADQQQQSPDGEGLPAPDSP) is disordered. Low complexity-rich tracts occupy residues 65-76 (SAPQAAQSQSQA) and 87-98 (QTGGQHADQQQQ). A coiled-coil region spans residues 144–174 (SSEAEQERRIRELEGELRIVEGVREERRREL).

The protein belongs to the Mediator complex subunit 21 family. Component of the Mediator complex.

It is found in the nucleus. Its function is as follows. Component of the Mediator complex, a coactivator involved in the regulated transcription of nearly all RNA polymerase II-dependent genes. Mediator functions as a bridge to convey information from gene-specific regulatory proteins to the basal RNA polymerase II transcription machinery. Mediator is recruited to promoters by direct interactions with regulatory proteins and serves as a scaffold for the assembly of a functional preinitiation complex with RNA polymerase II and the general transcription factors. This chain is Mediator of RNA polymerase II transcription subunit 21 (srb7), found in Aspergillus niger (strain ATCC MYA-4892 / CBS 513.88 / FGSC A1513).